The following is a 129-amino-acid chain: 3-aminoacrylate deaminase RutC (129 aa).

Belongs to the RutC family.

It catalyses the reaction (Z)-3-aminoacrylate + H2O + H(+) = 3-oxopropanoate + NH4(+). Its function is as follows. Involved in pyrimidine catabolism. Catalyzes the deamination of 3-aminoacrylate to malonic semialdehyde, a reaction that can also occur spontaneously. RutC may facilitate the reaction and modulate the metabolic fitness, rather than catalyzing essential functions. The sequence is that of 3-aminoacrylate deaminase RutC from Caulobacter sp. (strain K31).